The primary structure comprises 499 residues: Probable inactive receptor-like protein kinase At3g56050 (499 aa).

Positions 1–31 are cleaved as a signal peptide; sequence MSNNWKSVRLRLQNRTLVFLLVILSFGSCYS. Asparagine 14 carries N-linked (GlcNAc...) asparagine glycosylation. The Extracellular segment spans residues 32–146; the sequence is LKSQGDGFLE…SKTSSNSTIP (115 aa). Positions 80-121 are disordered; that stretch reads RDRPVARATPPSSSVSTRPDAKRSSTLPPPQKSPPAQHVSAP. Asparagine 142 is a glycosylation site (N-linked (GlcNAc...) asparagine). A helical membrane pass occupies residues 147-167; that stretch reads IVAGCIAGAVFILLLATGVFF. The Cytoplasmic portion of the chain corresponds to 168 to 499; sequence FKSKAGKSVN…WAELEVLSTA (332 aa). The 267-residue stretch at 208–474 folds into the Protein kinase domain; sequence EDFSNVIGSC…EVTGRLREIT (267 aa).

The protein resides in the cell membrane. The polypeptide is Probable inactive receptor-like protein kinase At3g56050 (Arabidopsis thaliana (Mouse-ear cress)).